The following is a 144-amino-acid chain: Large ribosomal subunit protein uL16 (144 aa).

The span at 1-17 shows a compositional bias: basic residues; sequence MLQPKKTKFRRQQKGRA. Residues 1–22 are disordered; the sequence is MLQPKKTKFRRQQKGRAKGNAQ.

This sequence belongs to the universal ribosomal protein uL16 family. In terms of assembly, part of the 50S ribosomal subunit.

Binds 23S rRNA and is also seen to make contacts with the A and possibly P site tRNAs. The protein is Large ribosomal subunit protein uL16 of Bacteroides thetaiotaomicron (strain ATCC 29148 / DSM 2079 / JCM 5827 / CCUG 10774 / NCTC 10582 / VPI-5482 / E50).